A 164-amino-acid polypeptide reads, in one-letter code: ATP synthase subunit b (164 aa).

A helical transmembrane segment spans residues 10-32; the sequence is AVAFVLFFVLFGKKLWTPLAAAL.

Belongs to the ATPase B chain family. In terms of assembly, F-type ATPases have 2 components, F(1) - the catalytic core - and F(0) - the membrane proton channel. F(1) has five subunits: alpha(3), beta(3), gamma(1), delta(1), epsilon(1). F(0) has three main subunits: a(1), b(2) and c(10-14). The alpha and beta chains form an alternating ring which encloses part of the gamma chain. F(1) is attached to F(0) by a central stalk formed by the gamma and epsilon chains, while a peripheral stalk is formed by the delta and b chains.

The protein localises to the cell inner membrane. In terms of biological role, f(1)F(0) ATP synthase produces ATP from ADP in the presence of a proton or sodium gradient. F-type ATPases consist of two structural domains, F(1) containing the extramembraneous catalytic core and F(0) containing the membrane proton channel, linked together by a central stalk and a peripheral stalk. During catalysis, ATP synthesis in the catalytic domain of F(1) is coupled via a rotary mechanism of the central stalk subunits to proton translocation. Functionally, component of the F(0) channel, it forms part of the peripheral stalk, linking F(1) to F(0). The sequence is that of ATP synthase subunit b from Gluconacetobacter diazotrophicus (strain ATCC 49037 / DSM 5601 / CCUG 37298 / CIP 103539 / LMG 7603 / PAl5).